A 37-amino-acid polypeptide reads, in one-letter code: Large ribosomal subunit protein bL36 (37 aa).

The protein belongs to the bacterial ribosomal protein bL36 family.

This chain is Large ribosomal subunit protein bL36 (rpmJ), found in Mycobacterium tuberculosis (strain ATCC 25618 / H37Rv).